Here is a 733-residue protein sequence, read N- to C-terminus: Phosphoribosylformylglycinamidine synthase subunit PurL (733 aa).

The active site involves His32. Tyr35 contributes to the ATP binding site. Glu81 lines the Mg(2+) pocket. Substrate contacts are provided by residues 82-85 and Arg104; that span reads SHNH. His83 serves as the catalytic Proton acceptor. Asp105 contacts Mg(2+). Gln230 serves as a coordination point for substrate. Asp258 lines the Mg(2+) pocket. 301–303 contributes to the substrate binding site; that stretch reads ESQ. Asp482 and Gly519 together coordinate ATP. Asn520 serves as a coordination point for Mg(2+). Ser522 is a substrate binding site.

This sequence belongs to the FGAMS family. As to quaternary structure, monomer. Part of the FGAM synthase complex composed of 1 PurL, 1 PurQ and 2 PurS subunits.

It localises to the cytoplasm. The catalysed reaction is N(2)-formyl-N(1)-(5-phospho-beta-D-ribosyl)glycinamide + L-glutamine + ATP + H2O = 2-formamido-N(1)-(5-O-phospho-beta-D-ribosyl)acetamidine + L-glutamate + ADP + phosphate + H(+). Its pathway is purine metabolism; IMP biosynthesis via de novo pathway; 5-amino-1-(5-phospho-D-ribosyl)imidazole from N(2)-formyl-N(1)-(5-phospho-D-ribosyl)glycinamide: step 1/2. Part of the phosphoribosylformylglycinamidine synthase complex involved in the purines biosynthetic pathway. Catalyzes the ATP-dependent conversion of formylglycinamide ribonucleotide (FGAR) and glutamine to yield formylglycinamidine ribonucleotide (FGAM) and glutamate. The FGAM synthase complex is composed of three subunits. PurQ produces an ammonia molecule by converting glutamine to glutamate. PurL transfers the ammonia molecule to FGAR to form FGAM in an ATP-dependent manner. PurS interacts with PurQ and PurL and is thought to assist in the transfer of the ammonia molecule from PurQ to PurL. The polypeptide is Phosphoribosylformylglycinamidine synthase subunit PurL (Methanocaldococcus jannaschii (strain ATCC 43067 / DSM 2661 / JAL-1 / JCM 10045 / NBRC 100440) (Methanococcus jannaschii)).